The primary structure comprises 283 residues: Phosphatidylserine decarboxylase proenzyme (283 aa).

Residues D89, H146, and S249 each act as charge relay system; for autoendoproteolytic cleavage activity in the active site. The active-site Schiff-base intermediate with substrate; via pyruvic acid; for decarboxylase activity is the S249. S249 carries the post-translational modification Pyruvic acid (Ser); by autocatalysis.

Belongs to the phosphatidylserine decarboxylase family. PSD-B subfamily. Prokaryotic type I sub-subfamily. Heterodimer of a large membrane-associated beta subunit and a small pyruvoyl-containing alpha subunit. The cofactor is pyruvate. In terms of processing, is synthesized initially as an inactive proenzyme. Formation of the active enzyme involves a self-maturation process in which the active site pyruvoyl group is generated from an internal serine residue via an autocatalytic post-translational modification. Two non-identical subunits are generated from the proenzyme in this reaction, and the pyruvate is formed at the N-terminus of the alpha chain, which is derived from the carboxyl end of the proenzyme. The autoendoproteolytic cleavage occurs by a canonical serine protease mechanism, in which the side chain hydroxyl group of the serine supplies its oxygen atom to form the C-terminus of the beta chain, while the remainder of the serine residue undergoes an oxidative deamination to produce ammonia and the pyruvoyl prosthetic group on the alpha chain. During this reaction, the Ser that is part of the protease active site of the proenzyme becomes the pyruvoyl prosthetic group, which constitutes an essential element of the active site of the mature decarboxylase.

The protein localises to the cell membrane. It catalyses the reaction a 1,2-diacyl-sn-glycero-3-phospho-L-serine + H(+) = a 1,2-diacyl-sn-glycero-3-phosphoethanolamine + CO2. It participates in phospholipid metabolism; phosphatidylethanolamine biosynthesis; phosphatidylethanolamine from CDP-diacylglycerol: step 2/2. Its function is as follows. Catalyzes the formation of phosphatidylethanolamine (PtdEtn) from phosphatidylserine (PtdSer). The sequence is that of Phosphatidylserine decarboxylase proenzyme from Legionella pneumophila subsp. pneumophila (strain Philadelphia 1 / ATCC 33152 / DSM 7513).